Consider the following 832-residue polypeptide: Mechanosensitive cation channel TMEM63B (832 aa).

Residues 1–40 (MLPFLLATLGTAALNSSNPKDYCYSARIRSTVLQGLPFGG) are Extracellular-facing. Residues 41–65 (VPTVLALDFMCFLALLFLFSILRKV) form a helical membrane-spanning segment. The S-palmitoyl cysteine moiety is linked to residue Cys-51. The Cytoplasmic portion of the chain corresponds to 66-145 (AWDYGRLALV…KDDEIRDKCG (80 aa)). The short motif at 86–88 (RER) is the Mediates endoplasmic reticulum retention element. Phosphoserine is present on residues Ser-111, Ser-113, Ser-114, and Ser-115. A lipid anchor (S-palmitoyl cysteine) is attached at Cys-126. A helical membrane pass occupies residues 146–178 (GDAVHYLSFQRHIIGLLVVVGVLSVGIVLPVNF). The Extracellular portion of the chain corresponds to 179–202 (SGDLLENNAYSFGRTTIANLKSGN). Residues 203–227 (NLLWLHTSFAFLYLLLTVYSMRRHT) traverse the membrane as a helical segment. Residues 228–427 (SKMRYKEDDL…IYWEHLSIRG (200 aa)) lie on the Cytoplasmic side of the membrane. The interval 231 to 426 (RYKEDDLVKR…NIYWEHLSIR (196 aa)) is intracellular linker IL2; confers mechanosensitivity. 2 S-palmitoyl cysteine lipidation sites follow: Cys-382 and Cys-398. The helical transmembrane segment at 428-457 (FIWWLRCLVINVVLFILLFFLTTPAIIITT) threads the bilayer. The Extracellular portion of the chain corresponds to 458–472 (MDKFNVTKPVEYLNN). N-linked (GlcNAc...) asparagine glycosylation is present at Asn-462. The helical transmembrane segment at 473–502 (PIITQFFPTLLLWCFSALLPTIVYYSAFFE) threads the bilayer. Over 503 to 506 (AHWT) the chain is Cytoplasmic. A helical membrane pass occupies residues 507 to 543 (RSGENRTTMHKCYTFLIFMVLLLPSLGLSSLDLFFRW). Residues 544–566 (LFDKKFLAEAAIRFECVFLPDNG) lie on the Extracellular side of the membrane. Residues 567 to 599 (AFFVNYVIASAFIGNAMDLLRIPGLLMYMIRLC) form a helical membrane-spanning segment. The gating helix stretch occupies residues 567–599 (AFFVNYVIASAFIGNAMDLLRIPGLLMYMIRLC). The Cytoplasmic portion of the chain corresponds to 600-619 (LARSAAERRNVKRHQAYEFQ). Residues 620–638 (FGAAYAWMMCVFTVVMTYS) form a helical membrane-spanning segment. Residues 639–641 (ITC) lie on the Extracellular side of the membrane. A helical membrane pass occupies residues 642–666 (PIIVPFGLMYMLLKHLVDRYNLYYA). The Cytoplasmic portion of the chain corresponds to 667 to 673 (YLPAKLD). The chain crosses the membrane as a helical span at residues 674–702 (KKIHSGAVNQVVAAPILCLFWLLFFSTMR). At 703–707 (TGFLA) the chain is on the extracellular side. A helical transmembrane segment spans residues 708-728 (PTSMFTFVVLVITIVICLCHV). Residues Cys-726 and Cys-729 are each lipidated (S-palmitoyl cysteine). The Cytoplasmic portion of the chain corresponds to 729-832 (CFGHFKYLSA…DSLIENEIHQ (104 aa)). 2 disordered regions span residues 748 to 767 (TDAVSSRSNGRPPTAGAVPK) and 776 to 818 (LQDS…DTDF). Polar residues predominate over residues 749 to 758 (DAVSSRSNGR). The segment covering 789–801 (PGSSGDEPPSSSS) has biased composition (low complexity).

The protein belongs to the CSC1 (TC 1.A.17) family. As to quaternary structure, monomer. Interacts with SLC19A2; interaction is required for the phospholipid scramblase activity. Palmitoylation is required for localization to the plasma membrane and stability. In terms of tissue distribution, expressed in cochlear hair cells (at protein level). Highly expressed in the subfornical organ of the brain. Expressed in small intestine. Brain-specific.

The protein localises to the cell membrane. The protein resides in the endoplasmic reticulum membrane. Its subcellular location is the lysosome membrane. It localises to the early endosome membrane. It carries out the reaction Ca(2+)(in) = Ca(2+)(out). The enzyme catalyses Mg(2+)(in) = Mg(2+)(out). The catalysed reaction is K(+)(in) = K(+)(out). It catalyses the reaction Na(+)(in) = Na(+)(out). It carries out the reaction Cs(+)(in) = Cs(+)(out). The enzyme catalyses a 1,2-diacyl-sn-glycero-3-phosphocholine(in) = a 1,2-diacyl-sn-glycero-3-phosphocholine(out). The catalysed reaction is a sphingomyelin(in) = a sphingomyelin(out). In terms of biological role, mechanosensitive cation channel with low conductance and high activation threshold. Osmosensitive cation channel preferentially activated by hypotonic stress. Also acts as a phospholipid scramblase in response to changes in membrane structure: upon changes in membrane curvature and thickness, alters its conformation and translocates phospholipids, such as phosphatidylcholine and sphingomyelin, thereby controlling plasma membrane lipid distribution. Forms a heterodimer with SLC19A2, which mediates phospholipid scramblase activity following Ca(2+) stimulation. Expressed in excitatory neurons of the subfornical organ and functions as a thirst receptor that mediates neuronal response to hyperosmolality to drive thirst and drinking behavior. Facilitates intestinal motility by promoting proliferation of intestinal stem cells. Essential for the baby's first breath and respiration throughout life. Upon lung inflation conducts cation currents in alveolar type 1 and 2 cells triggering lamellar body exocytosis and surfactant secretion into airspace. Acts as an osmosensor in cochlear outer hair cells (OHCs) where it mediates calcium influx and regulatory volume decrease response. Required for the maintenance of OHC morphology, OHC survival and normal hearing. Its function is as follows. Brain-specific osmosensitive calcium channel isoform. This Mus musculus (Mouse) protein is Mechanosensitive cation channel TMEM63B.